Consider the following 37-residue polypeptide: Chorion class CB protein PCH12 (37 aa).

Residues 1-26 (DGIFPTVGAGDVWYGCGDGAVGIVAE) form a central domain region. Positions 27–37 (TPFASTTTNPA) are right arm.

Belongs to the chorion protein family.

Its function is as follows. This protein is one of many from the eggshell of the silk moth. The polypeptide is Chorion class CB protein PCH12 (Antheraea polyphemus (Polyphemus moth)).